The chain runs to 325 residues: Small ribosomal subunit protein uS3 (325 aa).

Residues 38–106 (IRKMMSKGME…QVQLNILEVK (69 aa)) form the KH type-2 domain. The interval 217–325 (EALLRQQRRE…AQGAPEKAEG (109 aa)) is disordered. The span at 222–232 (QQRRERPRRGP) shows a compositional bias: basic residues. The span at 285–316 (TESAAVEGTPVETPAVTPETTAAPAAVTTAEA) shows a compositional bias: low complexity.

Belongs to the universal ribosomal protein uS3 family. In terms of assembly, part of the 30S ribosomal subunit. Forms a tight complex with proteins S10 and S14.

In terms of biological role, binds the lower part of the 30S subunit head. Binds mRNA in the 70S ribosome, positioning it for translation. The polypeptide is Small ribosomal subunit protein uS3 (Parafrankia sp. (strain EAN1pec)).